A 294-amino-acid polypeptide reads, in one-letter code: Nucleotide-binding protein Reut_A0350 (294 aa).

Residue 8–15 (GISGSGKS) coordinates ATP. 57 to 60 (DIRS) contributes to the GTP binding site.

Belongs to the RapZ-like family.

In terms of biological role, displays ATPase and GTPase activities. The polypeptide is Nucleotide-binding protein Reut_A0350 (Cupriavidus pinatubonensis (strain JMP 134 / LMG 1197) (Cupriavidus necator (strain JMP 134))).